The chain runs to 865 residues: Leucine--tRNA ligase (865 aa).

The short motif at 58–68 is the 'HIGH' region element; that stretch reads PYPSGNLHMGH. A 'KMSKS' region motif is present at residues 629–633; sequence KMSKS. Residue K632 coordinates ATP.

This sequence belongs to the class-I aminoacyl-tRNA synthetase family.

The protein localises to the cytoplasm. It carries out the reaction tRNA(Leu) + L-leucine + ATP = L-leucyl-tRNA(Leu) + AMP + diphosphate. This chain is Leucine--tRNA ligase, found in Synechococcus sp. (strain ATCC 27144 / PCC 6301 / SAUG 1402/1) (Anacystis nidulans).